The chain runs to 368 residues: DNA replication and repair protein RecF (368 aa).

Residue 30–37 coordinates ATP; that stretch reads GRNGSGKT.

Belongs to the RecF family.

Its subcellular location is the cytoplasm. The RecF protein is involved in DNA metabolism; it is required for DNA replication and normal SOS inducibility. RecF binds preferentially to single-stranded, linear DNA. It also seems to bind ATP. In Chlorobaculum tepidum (strain ATCC 49652 / DSM 12025 / NBRC 103806 / TLS) (Chlorobium tepidum), this protein is DNA replication and repair protein RecF.